The primary structure comprises 790 residues: Protein SEY1 (790 aa).

Residues 1–692 (MELSEGELSH…KRSIVQHITQ (692 aa)) are Cytoplasmic-facing. Positions 55-284 (GNNYHIISVF…VSNELFKPEY (230 aa)) constitute a GB1/RHD3-type G domain. 65–72 (GSQSTGKS) serves as a coordination point for GTP. The chain crosses the membrane as a helical span at residues 693–713 (IPYYIYLIILVLGWNEFMAII). At 714–716 (RNP) the chain is on the lumenal side. Residues 717–737 (LFFSLSIVLGATVYVLYYLGL) form a helical membrane-spanning segment. Over 738–790 (LRPALVVAQRTMDEVIVMAKTKLREVLIDDHEVTGRQLNKMAGSKENIELDDM) the chain is Cytoplasmic.

Belongs to the TRAFAC class dynamin-like GTPase superfamily. GB1/RHD3 GTPase family. RHD3 subfamily.

The protein localises to the endoplasmic reticulum membrane. In terms of biological role, cooperates with the reticulon proteins and tubule-shaping DP1 family proteins to generate and maintain the structure of the tubular endoplasmic reticulum network. Has GTPase activity, which is required for its function in ER organization. The protein is Protein SEY1 of Candida albicans (strain WO-1) (Yeast).